The sequence spans 341 residues: tRNA N6-adenosine threonylcarbamoyltransferase (341 aa).

Residues histidine 111 and histidine 115 each contribute to the Fe cation site. Residues 134–138 (LVSGG), aspartate 167, glycine 180, and asparagine 272 each bind substrate. A Fe cation-binding site is contributed by aspartate 300.

Belongs to the KAE1 / TsaD family. Requires Fe(2+) as cofactor.

The protein resides in the cytoplasm. It catalyses the reaction L-threonylcarbamoyladenylate + adenosine(37) in tRNA = N(6)-L-threonylcarbamoyladenosine(37) in tRNA + AMP + H(+). In terms of biological role, required for the formation of a threonylcarbamoyl group on adenosine at position 37 (t(6)A37) in tRNAs that read codons beginning with adenine. Is involved in the transfer of the threonylcarbamoyl moiety of threonylcarbamoyl-AMP (TC-AMP) to the N6 group of A37, together with TsaE and TsaB. TsaD likely plays a direct catalytic role in this reaction. The protein is tRNA N6-adenosine threonylcarbamoyltransferase of Edwardsiella ictaluri (strain 93-146).